A 397-amino-acid chain; its full sequence is Circumsporozoite protein (397 aa).

An N-terminal signal peptide occupies residues 1–18; sequence MMRKLAILSVSSFLFVEA. Residues 69 to 313 form a disordered region; it reads SRSLGENDDG…KNNNNEEPSD (245 aa). The interval 85–92 is required for the binding to heparan sulfate proteoglycans (HSPGs) on the surface of host hepatocytes; it reads KLRKPKHK. The tract at residues 93-97 is region I; contains the proteolytic cleavage site; sequence KLKQP. The span at 101-273 shows a compositional bias: low complexity; sequence NPDPNANPNV…PNANPNANPN (173 aa). A run of 42 repeats spans residues 105–108, 109–112, 113–116, 117–120, 121–124, 125–128, 129–132, 133–136, 137–140, 141–144, 145–148, 149–152, 153–156, 157–160, 161–164, 165–168, 169–172, 173–176, 177–180, 181–184, 185–188, 189–192, 193–196, 197–200, 201–204, 205–208, 209–212, 213–216, 217–220, 221–224, 225–228, 229–232, 233–236, 237–240, 241–244, 245–248, 249–252, 253–256, 257–260, 261–264, 265–268, and 269–272. Positions 105 to 272 are 42 X 4 AA tandem repeats of N-[AV]-[ND]-P; sequence NANPNVDPNA…NPNANPNANP (168 aa). The span at 274–290 shows a compositional bias: polar residues; sequence KNNQGNGQGHNMPNDPN. Positions 295-309 are enriched in low complexity; sequence ENANANSAVKNNNNE. The TSP type-1 domain maps to 322–375; sequence KIQNSLSTEWSPCSVTCGNGIQVRIKPGSANKPKDELDYANDIEKKICKMEKCS. Intrachain disulfides connect Cys-334–Cys-369 and Cys-338–Cys-374. O-linked (Fuc) threonine glycosylation is present at Thr-337. Cys-374 is lipidated: GPI-anchor amidated cysteine. The propeptide at 375–397 is removed in mature form; sequence SSVFNVVNSSIGLIMVLSFLFLN.

The protein belongs to the plasmodium circumsporozoite protein family. Post-translationally, during host cell invasion, proteolytically cleaved at the cell membrane in the region I by a papain-like cysteine protease of parasite origin. Cleavage is triggered by the sporozoite contact with highly sulfated heparan sulfate proteoglycans (HSPGs) present on the host hepatocyte cell surface. Cleavage exposes the TSP type-1 (TSR) domain and is required for productive invasion of host hepatocytes but not for adhesion to the host cell membrane. Cleavage is dispensable for sporozoite development in the oocyst, motility and for traversal of host and vector cells. O-glycosylated; maybe by POFUT2.

It is found in the cell membrane. It localises to the cytoplasm. Essential sporozoite protein. In the mosquito vector, required for sporozoite development in the oocyst, migration through the vector hemolymph and entry into the vector salivary glands. In the vertebrate host, required for sporozoite migration through the host dermis and infection of host hepatocytes. Binds to highly sulfated heparan sulfate proteoglycans (HSPGs) on the surface of host hepatocytes. Functionally, in the vertebrate host, binds to highly sulfated heparan sulfate proteoglycans (HSPGs) on the surface of host hepatocytes and is required for sporozoite invasion of the host hepatocytes. This Plasmodium falciparum (isolate NF54) protein is Circumsporozoite protein.